The following is a 602-amino-acid chain: Elongation factor 4 (602 aa).

The region spanning Asn2–Lys184 is the tr-type G domain. GTP-binding positions include Asp14–Thr19 and Asn131–Asp134.

The protein belongs to the TRAFAC class translation factor GTPase superfamily. Classic translation factor GTPase family. LepA subfamily.

Its subcellular location is the cell inner membrane. The catalysed reaction is GTP + H2O = GDP + phosphate + H(+). In terms of biological role, required for accurate and efficient protein synthesis under certain stress conditions. May act as a fidelity factor of the translation reaction, by catalyzing a one-codon backward translocation of tRNAs on improperly translocated ribosomes. Back-translocation proceeds from a post-translocation (POST) complex to a pre-translocation (PRE) complex, thus giving elongation factor G a second chance to translocate the tRNAs correctly. Binds to ribosomes in a GTP-dependent manner. This is Elongation factor 4 from Delftia acidovorans (strain DSM 14801 / SPH-1).